The chain runs to 492 residues: Membrane-bound glycerophospholipid O-acyltransferase 1 (492 aa).

Helical transmembrane passes span 33-53, 69-89, 125-145, 179-199, 237-257, and 296-316; these read VNFV…RIYL, ILGI…LFVL, IYIF…MIVT, PSLL…AGPC, MGAV…FLTL, and YFAW…FNGM. Catalysis depends on residues Asn-349 and His-380. The next 3 helical transmembrane spans lie at 370–390, 423–443, and 452–472; these read VLTF…YFTF, VVTW…FVML, and YKSV…FLPI. The residue at position 486 (Ser-486) is a Phosphoserine.

This sequence belongs to the membrane-bound acyltransferase family. In terms of tissue distribution, highly expressed in stomach, epididymis, and colon.

The protein resides in the endoplasmic reticulum membrane. The enzyme catalyses a 1-acyl-sn-glycero-3-phosphoethanolamine + an acyl-CoA = a 1,2-diacyl-sn-glycero-3-phosphoethanolamine + CoA. The catalysed reaction is a 1-acyl-sn-glycero-3-phospho-L-serine + an acyl-CoA = a 1,2-diacyl-sn-glycero-3-phospho-L-serine + CoA. It carries out the reaction a 1-acyl-sn-glycero-3-phosphocholine + an acyl-CoA = a 1,2-diacyl-sn-glycero-3-phosphocholine + CoA. It catalyses the reaction a 1-O-(1Z-alkenyl)-sn-glycero-3-phosphoethanolamine + (9Z)-octadecenoyl-CoA = 1-O-(1Z)-alkenyl-2-(9Z)-octadecenoyl-sn-glycero-3-phosphoethanolamine + CoA. The enzyme catalyses 1-octadecanoyl-sn-glycero-3-phosphoethanolamine + (9Z)-octadecenoyl-CoA = 1-octadecanoyl-2-(9Z-octadecenoyl)-sn-glycero-3-phosphoethanolamine + CoA. The catalysed reaction is 1-(9Z-octadecenoyl)-sn-glycero-3-phospho-L-serine + (9Z)-octadecenoyl-CoA = 1,2-di-(9Z)-octadecenoyl-sn-glycero-3-phospho-L-serine + CoA. It carries out the reaction 1-(9Z-octadecenoyl)-sn-glycero-3-phosphoethanolamine + (9Z)-octadecenoyl-CoA = 1,2-di-(9Z-octadecenoyl)-sn-glycero-3-phosphoethanolamine + CoA. It catalyses the reaction 1-hexadecanoyl-sn-glycero-3-phosphoethanolamine + (9Z)-octadecenoyl-CoA = 1-hexadecanoyl-2-(9Z-octadecenoyl)-sn-glycero-3-phosphoethanolamine + CoA. The enzyme catalyses 1-(10Z-heptadecenoyl)-sn-glycero-3-phosphoethanolamine + hexadecanoyl-CoA = 1-(10Z-heptadecenoyl)-2-hexadecanoyl-sn-glycero-3-phosphoethanolamine + CoA. The catalysed reaction is 1-(9Z-octadecenoyl)-sn-glycero-3-phospho-L-serine + octadecanoyl-CoA = 1-(9Z-octadecenoyl)-2-octadecanoyl-sn-glycero-3-phospho-L-serine + CoA. It carries out the reaction 1-(9Z-octadecenoyl)-sn-glycero-3-phospho-L-serine + (9Z)-hexadecenoyl-CoA = 1-(9Z-octadecenoyl)-2-(9Z-hexadecenoyl)-sn-glycero-3-phospho-L-serine + CoA. It catalyses the reaction 1-(9Z-octadecenoyl)-sn-glycero-3-phospho-L-serine + (9Z,12Z)-octadecadienoyl-CoA = 1-(9Z-octadecenoyl)-2-(9Z,12Z-octadienoyl)-sn-glycero-3-phospho-L-serine + CoA. The enzyme catalyses 1-hexadecanoyl-sn-glycero-3-phosphocholine + (9Z)-octadecenoyl-CoA = 1-hexadecanoyl-2-(9Z-octadecenoyl)-sn-glycero-3-phosphocholine + CoA. The catalysed reaction is 1-(10Z-heptadecenoyl)-sn-glycero-3-phosphoethanolamine + (9Z)-octadecenoyl-CoA = 1-(10Z-heptadecenoyl)-2-(9Z-octadecenoyl)-sn-glycero-3-phosphoethanolamine + CoA. It functions in the pathway lipid metabolism; phospholipid metabolism. Functionally, acyltransferase which catalyzes the transfer of an acyl group from an acyl-CoA towards a lysophospholipid producing a phospholipid and participates in the reacylation step of the phospholipid remodeling pathway also known as the Lands cycle. Acts on lysophosphatidylserine (1-acyl-2-hydroxy-sn-glycero-3-phospho-L-serine or LPS) and lysophosphatidylethanolamine (1-acyl-sn-glycero-3-phosphoethanolamine or LPE), and to a lesser extend lysophosphatidylcholine. Prefers oleoyl-CoA as the acyl donor and 1-oleoyl-LPE as acceptor. May play a role in neurite outgrowth during neuronal differentiation. In Mus musculus (Mouse), this protein is Membrane-bound glycerophospholipid O-acyltransferase 1.